Reading from the N-terminus, the 1127-residue chain is Caprin-2 (1127 aa).

The segment at 67 to 108 (YQSPSGHSEEEREGNMKSAKPQVNHSQHGESQRALSPLQSTL) is disordered. Residues 99–108 (RALSPLQSTL) are compositionally biased toward polar residues. Coiled coils occupy residues 129-156 (LKHKIRNIEKKKLKLEDYKDRLKSGEHL) and 194-216 (AQKKAQRREHMLKLEAEKKKLRT). Disordered stretches follow at residues 382–614 (NKQG…KDPV), 642–753 (DKPS…SSSV), and 922–975 (QCYK…PVDV). Basic and acidic residues-rich tracts occupy residues 402 to 432 (KRWDMLTEPDGQEKKQESFKSWEASGKHQEV) and 440 to 464 (EQRKQDTSKLRSTLPEEQKKQEISK). Polar residues-rich tracts occupy residues 512 to 531 (PKSWTPSMQSEQNTTKSWTT) and 544 to 567 (TPKSWENNVESQKHSLTSQSQISP). The span at 588-597 (LNTEPKDVPK) shows a compositional bias: basic and acidic residues. Composition is skewed to polar residues over residues 665 to 714 (KEQN…TSET) and 741 to 753 (QGFQSPPASSSSV). Phosphoserine occurs at positions 948 and 949. A compositionally biased stretch (polar residues) spans 956–970 (TFNSGDSGQGDSRSM). Positions 993 to 1127 (PQQMRVAFSA…TFSGYLLYQD (135 aa)) constitute a C1q domain. The Ca(2+) site is built by Asp-1078 and Glu-1084.

This sequence belongs to the caprin family. In terms of assembly, homotrimer; via C1q domain. Found in a complex with LRP6, CCNY and CDK14 during G2/M stage; CAPRIN2 functions as a scaffold for the complex by binding to CCNY via its N terminus and to CDK14 via its C terminus. Interacts with LRP5. Interacts with LRP6. Detected in all tissues tested with highest levels of expression in brain and spleen.

It is found in the cytoplasm. Its subcellular location is the mitochondrion. The protein localises to the cell membrane. Functionally, promotes phosphorylation of the Wnt coreceptor LRP6, leading to increased activity of the canonical Wnt signaling pathway. Facilitates constitutive LRP6 phosphorylation by CDK14/CCNY during G2/M stage of the cell cycle, which may potentiate cells for Wnt signaling. May regulate the transport and translation of mRNAs, modulating for instance the expression of proteins involved in synaptic plasticity in neurons. Involved in regulation of growth as erythroblasts shift from a highly proliferative state towards their terminal phase of differentiation. May be involved in apoptosis. In Homo sapiens (Human), this protein is Caprin-2.